A 161-amino-acid polypeptide reads, in one-letter code: Protein-export protein SecB (161 aa).

This sequence belongs to the SecB family. As to quaternary structure, homotetramer, a dimer of dimers. One homotetramer interacts with 1 SecA dimer.

The protein resides in the cytoplasm. Functionally, one of the proteins required for the normal export of preproteins out of the cell cytoplasm. It is a molecular chaperone that binds to a subset of precursor proteins, maintaining them in a translocation-competent state. It also specifically binds to its receptor SecA. This is Protein-export protein SecB from Rhodopseudomonas palustris (strain BisA53).